Reading from the N-terminus, the 868-residue chain is mRNA-capping enzyme (868 aa).

Lys282 serves as the catalytic N6-GMP-lysine intermediate. Residues 594–868 (GIYRAQTALI…LFGFICLRKN (275 aa)) enclose the mRNA cap 0 methyltransferase domain. Residues Lys607, Gly624, Asp646, and 710–712 (LFI) contribute to the S-adenosyl-L-methionine site.

It in the N-terminal section; belongs to the dsDNA virus mRNA guanylyltransferase family. In the C-terminal section; belongs to the class I-like SAM-binding methyltransferase superfamily. mRNA cap 0 methyltransferase family. Part of the viral DNA-directed RNA polymerase that consists of 8 polII-like subunits (RPB1, RPB2, RPB3, RPB5, RPB6, RPB7, RPB9, RPB10), a capping enzyme and a termination factor.

It is found in the virion. It catalyses the reaction a 5'-end triphospho-ribonucleoside in mRNA + H2O = a 5'-end diphospho-ribonucleoside in mRNA + phosphate + H(+). The enzyme catalyses a 5'-end diphospho-ribonucleoside in mRNA + GTP + H(+) = a 5'-end (5'-triphosphoguanosine)-ribonucleoside in mRNA + diphosphate. The catalysed reaction is a 5'-end (5'-triphosphoguanosine)-ribonucleoside in mRNA + S-adenosyl-L-methionine = a 5'-end (N(7)-methyl 5'-triphosphoguanosine)-ribonucleoside in mRNA + S-adenosyl-L-homocysteine. It participates in mRNA processing; mRNA capping. In terms of biological role, probably catalyzes the second reaction in the mRNA cap formation pathway. Forms a covalent complex with GTP. The protein is mRNA-capping enzyme of African swine fever virus (isolate Tick/South Africa/Pretoriuskop Pr4/1996) (ASFV).